A 363-amino-acid chain; its full sequence is Pyrimidine monooxygenase RutA (363 aa).

FMN is bound by residues 49-50, N115, E124, 140-141, and S190; these read IK and RY.

The protein belongs to the NtaA/SnaA/DszA monooxygenase family. RutA subfamily.

The enzyme catalyses uracil + FMNH2 + NADH + O2 = (Z)-3-ureidoacrylate + FMN + NAD(+) + H2O + H(+). It catalyses the reaction thymine + FMNH2 + NADH + O2 = (Z)-2-methylureidoacrylate + FMN + NAD(+) + H2O + H(+). Its function is as follows. Catalyzes the pyrimidine ring opening between N-3 and C-4 by an unusual flavin hydroperoxide-catalyzed mechanism, adding oxygen atoms in the process to yield ureidoacrylate peracid, that immediately reacts with FMN forming ureidoacrylate and FMN-N(5)-oxide. The FMN-N(5)-oxide reacts spontaneously with NADH to produce FMN. Requires the flavin reductase RutF to regenerate FMN in vivo. The polypeptide is Pyrimidine monooxygenase RutA (Escherichia coli O127:H6 (strain E2348/69 / EPEC)).